A 259-amino-acid polypeptide reads, in one-letter code: Proteasome subunit alpha type-7 (259 aa).

Belongs to the peptidase T1A family. The 26S proteasome consists of a 20S proteasome core and two 19S regulatory subunits. The 20S proteasome core is composed of 28 subunits that are arranged in four stacked rings, resulting in a barrel-shaped structure. The two end rings are each formed by seven alpha subunits, and the two central rings are each formed by seven beta subunits. The catalytic chamber with the active sites is on the inside of the barrel.

It is found in the cytoplasm. The protein localises to the nucleus. The proteasome is a multicatalytic proteinase complex which is characterized by its ability to cleave peptides with Arg, Phe, Tyr, Leu, and Glu adjacent to the leaving group at neutral or slightly basic pH. The proteasome has an ATP-dependent proteolytic activity. This is Proteasome subunit alpha type-7 (PAD1) from Solanum lycopersicum (Tomato).